Consider the following 377-residue polypeptide: Probable dehydratase NIT22 (377 aa).

NADP(+)-binding residues include lysine 101 and arginine 196. The tract at residues 220–243 (ERGPKMNEHVPSTPPRRPDAVSSF) is disordered. The region spanning 233-332 (PPRRPDAVSS…ILMWDMGLCK (100 aa)) is the MaoC-like domain. NADP(+) is bound by residues threonine 265 and isoleucine 287.

It belongs to the short-chain dehydrogenases/reductases (SDR) family.

It functions in the pathway siderophore biosynthesis. Probable dehydratase; part of the gene cluster that mediates the biosynthesis of hydroxamate-containing siderophores that play a critical role in virulence via intracellular iron acquisition during macrophage infection. This is Probable dehydratase NIT22 from Ajellomyces capsulatus (Darling's disease fungus).